Reading from the N-terminus, the 211-residue chain is Large ribosomal subunit protein bL9 (211 aa).

The disordered stretch occupies residues 180–211; sequence DDIGAAGMDDDDDDAPAPAQADPSSEESSEED.

The protein belongs to the bacterial ribosomal protein bL9 family.

Its function is as follows. Binds to the 23S rRNA. This Jannaschia sp. (strain CCS1) protein is Large ribosomal subunit protein bL9.